A 313-amino-acid polypeptide reads, in one-letter code: MLEIEKPKIETEELNDRYGRFVIEPLERGYGITLGNSMRRILLSSLPGAAVTSIKIEGVLHEFSTVPGVVEDVTEIILNIKNLTLKLHGDEEQVLRIEAEGEGVITAKDIIAPPEVEILNPDLVIAHIAEGGRLFMEMTVARGRGYVPAERNKKGEHVIGVIPVDSIFSPVLKVNFQVENTRVGQITDYDKLTLEVWTDGSIRPDEAVSLAARIMVEHLQLFVNLNERATGVEIMVEKEEDAKEKLAEMPIEDLDLSVRSYNCLKRAGINTVGELIQKTEADMMKVRNLGKKSLEEVISKLNSMGLSLRKEEE.

Residues 1 to 226 (MLEIEKPKIE…EHLQLFVNLN (226 aa)) are alpha N-terminal domain (alpha-NTD). Residues 243-313 (KEKLAEMPIE…MGLSLRKEEE (71 aa)) form an alpha C-terminal domain (alpha-CTD) region.

The protein belongs to the RNA polymerase alpha chain family. In terms of assembly, homodimer. The RNAP catalytic core consists of 2 alpha, 1 beta, 1 beta' and 1 omega subunit. When a sigma factor is associated with the core the holoenzyme is formed, which can initiate transcription.

The catalysed reaction is RNA(n) + a ribonucleoside 5'-triphosphate = RNA(n+1) + diphosphate. In terms of biological role, DNA-dependent RNA polymerase catalyzes the transcription of DNA into RNA using the four ribonucleoside triphosphates as substrates. This chain is DNA-directed RNA polymerase subunit alpha, found in Carboxydothermus hydrogenoformans (strain ATCC BAA-161 / DSM 6008 / Z-2901).